Here is a 461-residue protein sequence, read N- to C-terminus: Mannan endo-1,4-beta-mannosidase 4 (461 aa).

The substrate site is built by W80 and N195. Catalysis depends on E196, which acts as the Proton donor. Residue Y274 participates in substrate binding. The active-site Nucleophile is the E314. W357 and D364 together coordinate substrate.

Belongs to the glycosyl hydrolase 5 (cellulase A) family. As to expression, ubiquitous.

It catalyses the reaction Random hydrolysis of (1-&gt;4)-beta-D-mannosidic linkages in mannans, galactomannans and glucomannans.. The chain is Mannan endo-1,4-beta-mannosidase 4 (MAN4) from Oryza sativa subsp. japonica (Rice).